A 119-amino-acid chain; its full sequence is Large ribosomal subunit protein uL18 (119 aa).

Belongs to the universal ribosomal protein uL18 family. As to quaternary structure, part of the 50S ribosomal subunit; part of the 5S rRNA/L5/L18/L25 subcomplex. Contacts the 5S and 23S rRNAs.

Its function is as follows. This is one of the proteins that bind and probably mediate the attachment of the 5S RNA into the large ribosomal subunit, where it forms part of the central protuberance. The protein is Large ribosomal subunit protein uL18 of Clostridium botulinum (strain Alaska E43 / Type E3).